The following is a 173-amino-acid chain: T cell receptor gamma constant 1 (173 aa).

Positions 10–104 (PKPTIFLPSI…NKNGVDQEII (95 aa)) constitute an Ig-like domain. C32 and C88 form a disulfide bridge. 4 N-linked (GlcNAc...) asparagine glycosylation sites follow: N66, N120, N126, and N135. Residues 139–161 (YYMYLLLLLKSVVYFAIITCCLL) form a helical membrane-spanning segment.

In terms of assembly, gamma-delta TR is a heterodimer composed of a gamma and delta chain; disulfide-linked. The gamma-delta TR is associated with the transmembrane signaling CD3 coreceptor proteins following the stoichiometry: a single gamma-delta TR heterodimer associates with one CD3D-CD3E heterodimer, one CD3G-CD3E heterodimer and one CD247 homodimer forming a stable octameric structure. Upon activation, gamma-delta TR complex associates with FCER1G to initiate intracellular signaling.

Its subcellular location is the cell membrane. Functionally, constant region of T cell receptor (TR) gamma chain that participates in the antigen recognition. Gamma-delta TRs recognize a variety of self and foreign non-peptide antigens frequently expressed at the epithelial boundaries between the host and external environment, including endogenous lipids presented by MH-like protein CD1D and phosphoantigens presented by butyrophilin-like molecule BTN3A1. Upon antigen recognition induces rapid, innate-like immune responses involved in pathogen clearance and tissue repair. Binding of gamma-delta TR complex to antigen triggers phosphorylation of immunoreceptor tyrosine-based activation motifs (ITAMs) in the CD3 chains by the LCK and FYN kinases, allowing the recruitment, phosphorylation, and activation of ZAP70 that facilitates phosphorylation of the scaffolding proteins LCP2 and LAT. This lead to the formation of a supramolecular signalosome that recruits the phospholipase PLCG1, resulting in calcium mobilization and ERK activation, ultimately leading to T cell expansion and differentiation into effector cells. Gamma-delta TRs are produced through somatic rearrangement of a limited repertoire of variable (V), diversity (D), and joining (J) genes. The potential diversity of gamma-delta TRs is conferred by the unique ability to rearrange (D) genes in tandem and to utilize all three reading frames. The combinatorial diversity is considerably increased by the sequence exonuclease trimming and random nucleotide (N) region additions which occur during the V-(D)-J rearrangements. In Homo sapiens (Human), this protein is T cell receptor gamma constant 1.